Reading from the N-terminus, the 218-residue chain is Copper acquisition factor BIM1 (218 aa).

An N-terminal signal peptide occupies residues 1–19 (MFALKFILITSFIASTALA). H20 and H65 together coordinate Cu(2+). Cystine bridges form between C40–C144 and C110–C161. Residues N87, N91, and N124 are each glycosylated (N-linked (GlcNAc...) asparagine). Residue D138 participates in Cu(2+) binding. N-linked (GlcNAc...) asparagine glycans are attached at residues N158 and N170. Residues 160–194 (TCTDDASRTSNASSTSSGSATATSAAATSSSSGTS) are disordered. Residues 167-194 (RTSNASSTSSGSATATSAAATSSSSGTS) are compositionally biased toward low complexity. S190 carries GPI-anchor amidated serine lipidation. Positions 191–218 (SGTSGAIKEVVGLGALSLALGIAGLIIL) are cleaved as a propeptide — removed in mature form.

Belongs to the X325 family. Cu(2+) is required as a cofactor.

The protein localises to the cell membrane. In terms of biological role, lytic polysaccharide monooxygenase-like protein that has diverged to biological functions other than polysaccharide degradation since it does not perform oxidative cleavage of polysaccharides. Cell surface-bound protein that functions in the copper-accumulation pathway shared by the CUF1-dependent copper transporter CTR1. Involved in maintaining cell wall integrity during copper deficiency. Binds Cu(2+) with an estimated 1:1 stoichiometry and might serve as an extracellular copper ligand. FRE4 and FRE7 metalloreductases probably function together with CTR1 and BIM1 to liberate the Cu(2+) bound to the BIM1 copper-binding site for subsequent import of Cu(+) into the cell by CTR1, via the reduction of BIM1-bound Cu(2+) to Cu(+) to reduce binding affinity for BIM1 but increase affinity for CTR1. Facilitates copper acquisition in the brain of mammalian hosts and acts as a copper-dependent virulence trait in fungal meningitis. While BIM1 plays a critical role in cryptococcal meningitis, at least in part through its role in copper acquisition, it could play additional roles during copper limitation or as a means to invade and colonize host tissues in the brain, by compromising host carbohydrate integrity via its lytic polysaccharide monooxygenase (LPMO) activity, which has still to be determined. The protein is Copper acquisition factor BIM1 of Cryptococcus neoformans var. neoformans serotype D (strain JEC21 / ATCC MYA-565) (Filobasidiella neoformans).